The chain runs to 85 residues: Large ribosomal subunit protein bL27 (85 aa).

A disordered region spans residues 1 to 22 (MAHKKAGGSTRNGRDSESKRLG).

This sequence belongs to the bacterial ribosomal protein bL27 family.

This chain is Large ribosomal subunit protein bL27, found in Vibrio parahaemolyticus serotype O3:K6 (strain RIMD 2210633).